Consider the following 188-residue polypeptide: dCTP deaminase (188 aa).

Residues 111–116 (KSTYAR), 135–137 (TLE), Gln156, Tyr170, and Gln180 contribute to the dCTP site. Glu137 acts as the Proton donor/acceptor in catalysis.

It belongs to the dCTP deaminase family. Homotrimer.

The enzyme catalyses dCTP + H2O + H(+) = dUTP + NH4(+). Its pathway is pyrimidine metabolism; dUMP biosynthesis; dUMP from dCTP (dUTP route): step 1/2. Functionally, catalyzes the deamination of dCTP to dUTP. The protein is dCTP deaminase of Neisseria meningitidis serogroup C / serotype 2a (strain ATCC 700532 / DSM 15464 / FAM18).